Reading from the N-terminus, the 155-residue chain is NADPH-dependent 7-cyano-7-deazaguanine reductase (155 aa).

The active-site Thioimide intermediate is the Cys53. Residue Asp60 is the Proton donor of the active site. Substrate-binding positions include Val75–Ser77 and His94–Glu95.

Belongs to the GTP cyclohydrolase I family. QueF type 1 subfamily.

The protein localises to the cytoplasm. The catalysed reaction is 7-aminomethyl-7-carbaguanine + 2 NADP(+) = 7-cyano-7-deazaguanine + 2 NADPH + 3 H(+). Its pathway is tRNA modification; tRNA-queuosine biosynthesis. In terms of biological role, catalyzes the NADPH-dependent reduction of 7-cyano-7-deazaguanine (preQ0) to 7-aminomethyl-7-deazaguanine (preQ1). This chain is NADPH-dependent 7-cyano-7-deazaguanine reductase, found in Brucella abortus (strain S19).